The sequence spans 199 residues: ATP-dependent Clp protease proteolytic subunit (199 aa).

The active-site Nucleophile is Ser-99. The active site involves His-124.

The protein belongs to the peptidase S14 family. In terms of assembly, fourteen ClpP subunits assemble into 2 heptameric rings which stack back to back to give a disk-like structure with a central cavity, resembling the structure of eukaryotic proteasomes.

It is found in the cytoplasm. The catalysed reaction is Hydrolysis of proteins to small peptides in the presence of ATP and magnesium. alpha-casein is the usual test substrate. In the absence of ATP, only oligopeptides shorter than five residues are hydrolyzed (such as succinyl-Leu-Tyr-|-NHMec, and Leu-Tyr-Leu-|-Tyr-Trp, in which cleavage of the -Tyr-|-Leu- and -Tyr-|-Trp bonds also occurs).. Its function is as follows. Cleaves peptides in various proteins in a process that requires ATP hydrolysis. Has a chymotrypsin-like activity. Plays a major role in the degradation of misfolded proteins. This is ATP-dependent Clp protease proteolytic subunit from Lactococcus lactis subsp. cremoris (strain SK11).